We begin with the raw amino-acid sequence, 215 residues long: Thiamine-phosphate synthase (215 aa).

Residues glutamine 43 to lysine 47 and asparagine 75 contribute to the 4-amino-2-methyl-5-(diphosphooxymethyl)pyrimidine site. 2 residues coordinate Mg(2+): aspartate 76 and aspartate 95. Residue serine 114 participates in 4-amino-2-methyl-5-(diphosphooxymethyl)pyrimidine binding. Threonine 141 to threonine 143 contributes to the 2-[(2R,5Z)-2-carboxy-4-methylthiazol-5(2H)-ylidene]ethyl phosphate binding site. A 4-amino-2-methyl-5-(diphosphooxymethyl)pyrimidine-binding site is contributed by lysine 144. Residue glycine 172 participates in 2-[(2R,5Z)-2-carboxy-4-methylthiazol-5(2H)-ylidene]ethyl phosphate binding.

Belongs to the thiamine-phosphate synthase family. The cofactor is Mg(2+).

The catalysed reaction is 2-[(2R,5Z)-2-carboxy-4-methylthiazol-5(2H)-ylidene]ethyl phosphate + 4-amino-2-methyl-5-(diphosphooxymethyl)pyrimidine + 2 H(+) = thiamine phosphate + CO2 + diphosphate. It carries out the reaction 2-(2-carboxy-4-methylthiazol-5-yl)ethyl phosphate + 4-amino-2-methyl-5-(diphosphooxymethyl)pyrimidine + 2 H(+) = thiamine phosphate + CO2 + diphosphate. It catalyses the reaction 4-methyl-5-(2-phosphooxyethyl)-thiazole + 4-amino-2-methyl-5-(diphosphooxymethyl)pyrimidine + H(+) = thiamine phosphate + diphosphate. Its pathway is cofactor biosynthesis; thiamine diphosphate biosynthesis; thiamine phosphate from 4-amino-2-methyl-5-diphosphomethylpyrimidine and 4-methyl-5-(2-phosphoethyl)-thiazole: step 1/1. Condenses 4-methyl-5-(beta-hydroxyethyl)thiazole monophosphate (THZ-P) and 2-methyl-4-amino-5-hydroxymethyl pyrimidine pyrophosphate (HMP-PP) to form thiamine monophosphate (TMP). This Streptomyces avermitilis (strain ATCC 31267 / DSM 46492 / JCM 5070 / NBRC 14893 / NCIMB 12804 / NRRL 8165 / MA-4680) protein is Thiamine-phosphate synthase.